The following is a 75-amino-acid chain: Small capsomere-interacting protein (75 aa).

The protein belongs to the herpesviridae small capsomere-interacting protein family. As to quaternary structure, interacts with the major capsid protein/MCP.

Its subcellular location is the virion. The protein localises to the host nucleus. Its function is as follows. Participates in the assembly of the infectious particles by decorating the outer surface of the capsid shell and thus forming a layer between the capsid and the tegument. Complexes composed of the major capsid protein and small capsomere-interacting protein/SCP assemble together in the host cytoplasm and are translocated to the nucleus, where they accumulate and participate in capsid assembly. The sequence is that of Small capsomere-interacting protein from Homo sapiens (Human).